The primary structure comprises 101 residues: Large ribosomal subunit protein uL24 (101 aa).

Belongs to the universal ribosomal protein uL24 family. As to quaternary structure, part of the 50S ribosomal subunit.

In terms of biological role, one of two assembly initiator proteins, it binds directly to the 5'-end of the 23S rRNA, where it nucleates assembly of the 50S subunit. Its function is as follows. One of the proteins that surrounds the polypeptide exit tunnel on the outside of the subunit. The protein is Large ribosomal subunit protein uL24 of Jannaschia sp. (strain CCS1).